Here is a 272-residue protein sequence, read N- to C-terminus: MTSQQAHAIPDVQNLNDSRKLAIDKVGIKSIRHPVRVSDKNGGVQHTIAVFNMYVGLPHNFKGTHMSRFIEIINGNEREISVESIEPMLREMVKRLEAETGQIELTFPYFINKSAPISGVQSLMDYEVTFTAEIREGGAYTFTMKTVVPVTSLCPCSKKISEYGAHNQRSHVTVTAQTNSFLWIEELVQLVESQASCQLYGLLKRPDEKYVTEHAYDNPKFVEDMVRDVAGLLNAEARIDCYRVESENFESIHNHSAYALIECDKRLVVGAN.

Belongs to the GTP cyclohydrolase IV family.

It carries out the reaction GTP + H2O = 7,8-dihydroneopterin 3'-triphosphate + formate + H(+). The protein operates within cofactor biosynthesis; 7,8-dihydroneopterin triphosphate biosynthesis; 7,8-dihydroneopterin triphosphate from GTP: step 1/1. In terms of biological role, converts GTP to 7,8-dihydroneopterin triphosphate. This is GTP cyclohydrolase FolE2 from Aromatoleum aromaticum (strain DSM 19018 / LMG 30748 / EbN1) (Azoarcus sp. (strain EbN1)).